Here is a 551-residue protein sequence, read N- to C-terminus: Tetrachloroethene reductive dehalogenase (551 aa).

Residues Met1–Ala39 constitute a signal peptide (tat-type signal). The 30-residue stretch at Pro411–Asp440 folds into the 4Fe-4S ferredoxin-type 1 domain. [4Fe-4S] cluster is bound by residues Cys420, Cys423, Cys426, Cys430, Cys467, Cys478, Cys481, and Cys485. One can recognise a 4Fe-4S ferredoxin-type 2 domain in the interval Cys478 to Asp496.

Belongs to the PceA family. The cofactor is [4Fe-4S] cluster. Corrinoid serves as cofactor. Post-translationally, predicted to be exported by the Tat system. The position of the signal peptide cleavage has not been experimentally proven.

Its subcellular location is the cell membrane. The enzyme catalyses trichloroethene + chloride + A + H(+) = tetrachloroethene + AH2. It carries out the reaction trichloroethene + AH2 = (Z)-1,2-dichloroethene + chloride + A + H(+). Catalyzes the reductive dechlorination of tetrachloroethene (PCE) to trichloroethene (TCE) and of trichloroethene to cis-1,2-dichloroethene (DCE). This is Tetrachloroethene reductive dehalogenase from Desulfitobacterium hafniense (Desulfitobacterium frappieri).